Reading from the N-terminus, the 333-residue chain is N-acetyl-gamma-glutamyl-phosphate reductase (333 aa).

Residue cysteine 136 is part of the active site.

Belongs to the NAGSA dehydrogenase family. Type 1 subfamily.

Its subcellular location is the cytoplasm. It carries out the reaction N-acetyl-L-glutamate 5-semialdehyde + phosphate + NADP(+) = N-acetyl-L-glutamyl 5-phosphate + NADPH + H(+). Its pathway is amino-acid biosynthesis; L-arginine biosynthesis; N(2)-acetyl-L-ornithine from L-glutamate: step 3/4. Functionally, catalyzes the NADPH-dependent reduction of N-acetyl-5-glutamyl phosphate to yield N-acetyl-L-glutamate 5-semialdehyde. The sequence is that of N-acetyl-gamma-glutamyl-phosphate reductase from Xylella fastidiosa (strain 9a5c).